A 520-amino-acid chain; its full sequence is Cytochrome P450 4F8 (520 aa).

The helical transmembrane segment at 15 to 37 (AASPWLLLLVVGASWLLARILAW) threads the bilayer. Position 468 (C468) interacts with heme.

The protein belongs to the cytochrome P450 family. It depends on heme as a cofactor. In terms of tissue distribution, expressed in the epithelium of seminal vesicles, in renal cortex, in adult and fetal liver, in epidermis, in corneal epithelium, in sweat glands, hair follicles, epithelial linings of the ampulla of vas deferens and of the stomach and small intestine, as well as in the transitional epithelium of the bladder and ureter (at protein level). In the epidermis, expressed from the basal cell to the granular cell layers. In the corneal epithelium, expressed in all cell layers. Also detected in prostate. Up-regulated in the epidermis of psoriatic lesions.

It localises to the endoplasmic reticulum membrane. It is found in the microsome membrane. It catalyses the reaction an organic molecule + reduced [NADPH--hemoprotein reductase] + O2 = an alcohol + oxidized [NADPH--hemoprotein reductase] + H2O + H(+). The enzyme catalyses (5Z,8Z,11Z,14Z)-eicosatetraenoate + reduced [NADPH--hemoprotein reductase] + O2 = (18R)-hydroxy-(5Z,8Z,11Z,14Z)-eicosatetraenoate + oxidized [NADPH--hemoprotein reductase] + H2O + H(+). The catalysed reaction is (4Z,7Z,10Z,13Z,16Z)-docosapentaenoate + reduced [NADPH--hemoprotein reductase] + O2 = 20-hydroxy-(4Z,7Z,10Z,13Z,16Z)-docosapentaenoate + oxidized [NADPH--hemoprotein reductase] + H2O + H(+). It carries out the reaction prostaglandin H1 + reduced [NADPH--hemoprotein reductase] + O2 = 19-hydroxyprostaglandin H1 + oxidized [NADPH--hemoprotein reductase] + H2O + H(+). It catalyses the reaction prostaglandin H2 + reduced [NADPH--hemoprotein reductase] + O2 = 19-hydroxyprostaglandin H2 + oxidized [NADPH--hemoprotein reductase] + H2O + H(+). The enzyme catalyses prostaglandin I2 + reduced [NADPH--hemoprotein reductase] + O2 = 19-hydroxy-prostaglandin I2 + oxidized [NADPH--hemoprotein reductase] + H2O + H(+). The catalysed reaction is (4Z,7Z,10Z,13Z,16Z,19Z)-docosahexaenoate + reduced [NADPH--hemoprotein reductase] + O2 = 10,11-epoxy-(4Z,7Z,13Z,16Z,19Z)-docosapentaenoate + oxidized [NADPH--hemoprotein reductase] + H2O + H(+). It carries out the reaction (4Z,7Z,10Z,13Z,16Z,19Z)-docosahexaenoate + reduced [NADPH--hemoprotein reductase] + O2 = 13,14-epoxy-(4Z,7Z,10Z,16Z,19Z)-docosapentaenoate + oxidized [NADPH--hemoprotein reductase] + H2O + H(+). It catalyses the reaction (4Z,7Z,10Z,13Z,16Z,19Z)-docosahexaenoate + reduced [NADPH--hemoprotein reductase] + O2 = 16,17-epoxy-(4Z,7Z,10Z,13Z,19Z)-docosapentaenoate + oxidized [NADPH--hemoprotein reductase] + H2O + H(+). The enzyme catalyses (4Z,7Z,10Z,13Z,16Z,19Z)-docosahexaenoate + reduced [NADPH--hemoprotein reductase] + O2 = 19,20-epoxy-(4Z,7Z,10Z,13Z,16Z)-docosapentaenoate + oxidized [NADPH--hemoprotein reductase] + H2O + H(+). The catalysed reaction is (7Z,10Z,13Z,16Z,19Z)-docosapentaenoate + reduced [NADPH--hemoprotein reductase] + O2 = 10,11-epoxy-(7Z,13Z,16Z,19Z)-docosatetraenoate + oxidized [NADPH--hemoprotein reductase] + H2O + H(+). It carries out the reaction (7Z,10Z,13Z,16Z,19Z)-docosapentaenoate + reduced [NADPH--hemoprotein reductase] + O2 = 13,14-epoxy-(7Z,10Z,16Z,19Z)-docosatetraenoate + oxidized [NADPH--hemoprotein reductase] + H2O + H(+). It catalyses the reaction (7Z,10Z,13Z,16Z,19Z)-docosapentaenoate + reduced [NADPH--hemoprotein reductase] + O2 = 16,17-epoxy-(7Z,10Z,13Z,19Z)-docosatetraenoate + oxidized [NADPH--hemoprotein reductase] + H2O + H(+). The enzyme catalyses (7Z,10Z,13Z,16Z,19Z)-docosapentaenoate + reduced [NADPH--hemoprotein reductase] + O2 = 19,20-epoxy-(7Z,10Z,13Z,16Z)-docosatetraenoate + oxidized [NADPH--hemoprotein reductase] + H2O + H(+). Its pathway is lipid metabolism; fatty acid metabolism. Functionally, a cytochrome P450 monooxygenase involved in the metabolism of endogenous polyunsaturated fatty acids (PUFAs) and their oxygenated derivatives (oxylipins). Mechanistically, uses molecular oxygen inserting one oxygen atom into a substrate, and reducing the second into a water molecule, with two electrons provided by NADPH via cytochrome P450 reductase (CPR; NADPH-ferrihemoprotein reductase). Catalyzes the hydroxylation of carbon hydrogen bonds, with preference for omega-1 and omega-2 positions. Hydroxylates (5Z,8Z,11Z,14Z)-eicosatetraenoic acid (arachidonate) predominantly at omega-2 position to form (18R)-hydroxyeicosatetraenoic acid (18R-HETE). Exhibits omega-1 hydroxylase activity toward prostaglandin (PG) H1, PGH2 and PGI2. Catalyzes the epoxidation of double bonds of PUFAs, including docosahexaenoic and docosapentaenoic acids. Shows little activity against PGD2, PGE1, PGE2, PGF2alpha, and leukotriene B4. The chain is Cytochrome P450 4F8 from Homo sapiens (Human).